A 72-amino-acid chain; its full sequence is uncharacterized protein (72 aa).

Residues 51-72 (AKGGRQKGEVVGVDDQCKEHKE) are disordered.

It belongs to the YiiE family.

This is an uncharacterized protein from Escherichia coli O157:H7.